A 432-amino-acid polypeptide reads, in one-letter code: Serine--tRNA ligase (432 aa).

235-237 (TSE) serves as a coordination point for L-serine. 266 to 268 (RSE) provides a ligand contact to ATP. L-serine is bound at residue Glu289. Position 353-356 (353-356 (EISS)) interacts with ATP. Ser388 lines the L-serine pocket.

This sequence belongs to the class-II aminoacyl-tRNA synthetase family. Type-1 seryl-tRNA synthetase subfamily. In terms of assembly, homodimer. The tRNA molecule binds across the dimer.

The protein localises to the cytoplasm. It catalyses the reaction tRNA(Ser) + L-serine + ATP = L-seryl-tRNA(Ser) + AMP + diphosphate + H(+). It carries out the reaction tRNA(Sec) + L-serine + ATP = L-seryl-tRNA(Sec) + AMP + diphosphate + H(+). The protein operates within aminoacyl-tRNA biosynthesis; selenocysteinyl-tRNA(Sec) biosynthesis; L-seryl-tRNA(Sec) from L-serine and tRNA(Sec): step 1/1. Catalyzes the attachment of serine to tRNA(Ser). Is also able to aminoacylate tRNA(Sec) with serine, to form the misacylated tRNA L-seryl-tRNA(Sec), which will be further converted into selenocysteinyl-tRNA(Sec). In Paraburkholderia phymatum (strain DSM 17167 / CIP 108236 / LMG 21445 / STM815) (Burkholderia phymatum), this protein is Serine--tRNA ligase.